The sequence spans 185 residues: Ribosome-recycling factor (185 aa).

This sequence belongs to the RRF family.

It is found in the cytoplasm. Its function is as follows. Responsible for the release of ribosomes from messenger RNA at the termination of protein biosynthesis. May increase the efficiency of translation by recycling ribosomes from one round of translation to another. The chain is Ribosome-recycling factor from Bacillus cereus (strain ATCC 10987 / NRS 248).